The following is a 56-amino-acid chain: Venom peptide 5 (56 aa).

Residues 1-26 (MKTASFILSFVVLLIVIITWIGEVSA) form the signal peptide. The propeptide occupies 27–42 (VSEPEPVAKATAHAAA). A disulfide bridge links Cys-49 with Cys-54.

Post-translationally, probably contains 1 disulfide bond, which may be crucial for activity, since the linear peptide without disulfide bond is inactive. In terms of tissue distribution, expressed by the venom gland.

Its subcellular location is the secreted. The chain is Venom peptide 5 from Eumenes pomiformis (Potter wasp).